Here is an 82-residue protein sequence, read N- to C-terminus: ATP synthase subunit c, chloroplastic (82 aa).

Transmembrane regions (helical) follow at residues 3–23 (PLICAASVVGAGLAIGLGAIG) and 57–77 (LAFMEALTIYGLVVALALMFA).

The protein belongs to the ATPase C chain family. F-type ATPases have 2 components, F(1) - the catalytic core - and F(0) - the membrane proton channel. F(1) has five subunits: alpha(3), beta(3), gamma(1), delta(1), epsilon(1). F(0) has four main subunits: a(1), b(1), b'(1) and c(10-14). The alpha and beta chains form an alternating ring which encloses part of the gamma chain. F(1) is attached to F(0) by a central stalk formed by the gamma and epsilon chains, while a peripheral stalk is formed by the delta, b and b' chains.

It localises to the plastid. The protein resides in the chloroplast thylakoid membrane. F(1)F(0) ATP synthase produces ATP from ADP in the presence of a proton or sodium gradient. F-type ATPases consist of two structural domains, F(1) containing the extramembraneous catalytic core and F(0) containing the membrane proton channel, linked together by a central stalk and a peripheral stalk. During catalysis, ATP synthesis in the catalytic domain of F(1) is coupled via a rotary mechanism of the central stalk subunits to proton translocation. Its function is as follows. Key component of the F(0) channel; it plays a direct role in translocation across the membrane. A homomeric c-ring of between 10-14 subunits forms the central stalk rotor element with the F(1) delta and epsilon subunits. This chain is ATP synthase subunit c, chloroplastic, found in Ostreococcus tauri.